We begin with the raw amino-acid sequence, 320 residues long: Glycerol-3-phosphate dehydrogenase [NAD(P)+] (320 aa).

Residues Phe11, Arg30, and Lys102 each coordinate NADPH. Sn-glycerol 3-phosphate contacts are provided by Lys102, Gly130, and Ser132. NADPH is bound at residue Ala134. Sn-glycerol 3-phosphate-binding residues include Lys185, Asp238, Ser248, Arg249, and Asn250. Lys185 acts as the Proton acceptor in catalysis. Arg249 contacts NADPH. Residue Glu270 coordinates NADPH.

The protein belongs to the NAD-dependent glycerol-3-phosphate dehydrogenase family.

The protein localises to the cytoplasm. The catalysed reaction is sn-glycerol 3-phosphate + NAD(+) = dihydroxyacetone phosphate + NADH + H(+). It carries out the reaction sn-glycerol 3-phosphate + NADP(+) = dihydroxyacetone phosphate + NADPH + H(+). Its pathway is membrane lipid metabolism; glycerophospholipid metabolism. Its function is as follows. Catalyzes the reduction of the glycolytic intermediate dihydroxyacetone phosphate (DHAP) to sn-glycerol 3-phosphate (G3P), the key precursor for phospholipid synthesis. The sequence is that of Glycerol-3-phosphate dehydrogenase [NAD(P)+] from Ruegeria sp. (strain TM1040) (Silicibacter sp.).